Reading from the N-terminus, the 408-residue chain is uncharacterized protein (408 aa).

2 disordered regions span residues 218 to 265 and 367 to 408; these read EPTA…TSER and MESE…ETPN. The segment covering 369 to 379 has biased composition (low complexity); that stretch reads SEVINSSSSTS. Acidic residues predominate over residues 394-408; the sequence is IVEEVPETAENETPN.

This sequence to C.elegans C05E11.1.

This is an uncharacterized protein from Arabidopsis thaliana (Mouse-ear cress).